A 121-amino-acid polypeptide reads, in one-letter code: Small ribosomal subunit protein uS13 (121 aa).

Positions 93–121 are disordered; the sequence is RGLPVRGQNTKNNARTRKGPRRTVANKKK. The span at 106–121 shows a compositional bias: basic residues; it reads ARTRKGPRRTVANKKK.

This sequence belongs to the universal ribosomal protein uS13 family. As to quaternary structure, part of the 30S ribosomal subunit. Forms a loose heterodimer with protein S19. Forms two bridges to the 50S subunit in the 70S ribosome.

Located at the top of the head of the 30S subunit, it contacts several helices of the 16S rRNA. In the 70S ribosome it contacts the 23S rRNA (bridge B1a) and protein L5 of the 50S subunit (bridge B1b), connecting the 2 subunits; these bridges are implicated in subunit movement. Contacts the tRNAs in the A and P-sites. The sequence is that of Small ribosomal subunit protein uS13 from Bacillus licheniformis (strain ATCC 14580 / DSM 13 / JCM 2505 / CCUG 7422 / NBRC 12200 / NCIMB 9375 / NCTC 10341 / NRRL NRS-1264 / Gibson 46).